The chain runs to 196 residues: GTP cyclohydrolase-2 (196 aa).

GTP is bound at residue 49–53; sequence RVHSE. Cys-54, Cys-65, and Cys-67 together coordinate Zn(2+). GTP contacts are provided by residues Gln-70, 92–94, and Thr-114; that span reads EGR. The active-site Proton acceptor is Asp-126. Arg-128 functions as the Nucleophile in the catalytic mechanism. 2 residues coordinate GTP: Thr-149 and Lys-154.

The protein belongs to the GTP cyclohydrolase II family. Homodimer. Requires Zn(2+) as cofactor.

The enzyme catalyses GTP + 4 H2O = 2,5-diamino-6-hydroxy-4-(5-phosphoribosylamino)-pyrimidine + formate + 2 phosphate + 3 H(+). It participates in cofactor biosynthesis; riboflavin biosynthesis; 5-amino-6-(D-ribitylamino)uracil from GTP: step 1/4. Functionally, catalyzes the conversion of GTP to 2,5-diamino-6-ribosylamino-4(3H)-pyrimidinone 5'-phosphate (DARP), formate and pyrophosphate. The polypeptide is GTP cyclohydrolase-2 (Escherichia coli O45:K1 (strain S88 / ExPEC)).